A 506-amino-acid polypeptide reads, in one-letter code: ATP synthase subunit alpha, chloroplastic (506 aa).

ATP is bound at residue G170–T177.

This sequence belongs to the ATPase alpha/beta chains family. F-type ATPases have 2 components, CF(1) - the catalytic core - and CF(0) - the membrane proton channel. CF(1) has five subunits: alpha(3), beta(3), gamma(1), delta(1), epsilon(1). CF(0) has four main subunits: a, b, b' and c.

It is found in the plastid. The protein resides in the chloroplast thylakoid membrane. It catalyses the reaction ATP + H2O + 4 H(+)(in) = ADP + phosphate + 5 H(+)(out). In terms of biological role, produces ATP from ADP in the presence of a proton gradient across the membrane. The alpha chain is a regulatory subunit. The polypeptide is ATP synthase subunit alpha, chloroplastic (Chlorokybus atmophyticus (Soil alga)).